A 448-amino-acid polypeptide reads, in one-letter code: Beta-glucosidase A (448 aa).

The active-site Proton donor is Glu166. Glu355 (nucleophile) is an active-site residue.

It belongs to the glycosyl hydrolase 1 family.

The catalysed reaction is Hydrolysis of terminal, non-reducing beta-D-glucosyl residues with release of beta-D-glucose.. It functions in the pathway glycan metabolism; cellulose degradation. In Acetivibrio thermocellus (strain ATCC 27405 / DSM 1237 / JCM 9322 / NBRC 103400 / NCIMB 10682 / NRRL B-4536 / VPI 7372) (Clostridium thermocellum), this protein is Beta-glucosidase A (bglA).